The primary structure comprises 741 residues: Multifunctional procollagen lysine hydroxylase and glycosyltransferase LH3 (741 aa).

A signal peptide spans 1–27 (MAASVPEPRLLLLLLLLLPPLPPVTSA). Positions 28–293 (SDRPRGANPV…FCNLNRRTLP (266 aa)) are required for glycosyltransferase activity. 47–49 (VAT) provides a ligand contact to UDP. Asn-66 carries N-linked (GlcNAc...) asparagine glycosylation. Asp-115, Asp-118, and His-256 together coordinate Mn(2+). A UDP-binding site is contributed by 115–117 (DSY). Residue 259-262 (GPTK) participates in UDP binding. Intrachain disulfides connect Cys-282-Cys-285 and Cys-382-Cys-388. The accessory region stretch occupies residues 298–523 (PPRVLLAVFV…EFGRLLSTSH (226 aa)). Asn-551 carries an N-linked (GlcNAc...) asparagine glycan. Residues Cys-566 and Cys-701 are joined by a disulfide bond. 2 residues coordinate 2-oxoglutarate: Arg-602 and Tyr-659. The Fe2OG dioxygenase domain maps to 650-741 (RAVMNFVVRY…RYIMVSFVDP (92 aa)). Positions 670 and 672 each coordinate Fe cation. Residues 675–718 (TFTLNVALNHKGVDYEGGGCRFLRYDCRVSSPRKGWALLHPGRL) are important for dimerization. Residue Asn-679 coordinates 2-oxoglutarate. His-722 is a binding site for Fe cation. 2-oxoglutarate is bound at residue Arg-732.

As to quaternary structure, homodimer. Requires Fe(2+) as cofactor. It depends on L-ascorbate as a cofactor. The cofactor is Mn(2+). Detected in heart and bone.

It is found in the rough endoplasmic reticulum. The protein resides in the endoplasmic reticulum lumen. Its subcellular location is the endoplasmic reticulum membrane. It localises to the secreted. The protein localises to the extracellular space. The enzyme catalyses L-lysyl-[collagen] + 2-oxoglutarate + O2 = (5R)-5-hydroxy-L-lysyl-[collagen] + succinate + CO2. It carries out the reaction (5R)-5-hydroxy-L-lysyl-[collagen] + UDP-alpha-D-galactose = (5R)-5-O-(beta-D-galactosyl)-5-hydroxy-L-lysyl-[collagen] + UDP + H(+). The catalysed reaction is (5R)-5-O-(beta-D-galactosyl)-5-hydroxy-L-lysyl-[collagen] + UDP-alpha-D-glucose = (5R)-5-O-[alpha-D-glucosyl-(1-&gt;2)-beta-D-galactosyl]-5-hydroxy-L-lysyl-[collagen] + UDP + H(+). Functionally, multifunctional enzyme that catalyzes a series of post-translational modifications on Lys residues in procollagen. Plays a redundant role in catalyzing the formation of hydroxylysine residues in -Xaa-Lys-Gly- sequences in collagens. Plays a redundant role in catalyzing the transfer of galactose onto hydroxylysine groups, giving rise to galactosyl 5-hydroxylysine. Has an essential role by catalyzing the subsequent transfer of glucose moieties, giving rise to 1,2-glucosylgalactosyl-5-hydroxylysine residues. Catalyzes hydroxylation and glycosylation of Lys residues in the MBL1 collagen-like domain, giving rise to hydroxylysine and 1,2-glucosylgalactosyl-5-hydroxylysine residues. Catalyzes hydroxylation and glycosylation of Lys residues in the ADIPOQ collagen-like domain, giving rise to hydroxylysine and 1,2-glucosylgalactosyl-5-hydroxylysine residues. Essential for normal biosynthesis and secretion of type IV collagens. Essential for normal formation of basement membranes. This Rattus norvegicus (Rat) protein is Multifunctional procollagen lysine hydroxylase and glycosyltransferase LH3 (Plod3).